We begin with the raw amino-acid sequence, 263 residues long: Acyl-[acyl-carrier-protein]--UDP-N-acetylglucosamine O-acyltransferase (263 aa).

Belongs to the transferase hexapeptide repeat family. LpxA subfamily. In terms of assembly, homotrimer.

Its subcellular location is the cytoplasm. The catalysed reaction is a (3R)-hydroxyacyl-[ACP] + UDP-N-acetyl-alpha-D-glucosamine = a UDP-3-O-[(3R)-3-hydroxyacyl]-N-acetyl-alpha-D-glucosamine + holo-[ACP]. Its pathway is glycolipid biosynthesis; lipid IV(A) biosynthesis; lipid IV(A) from (3R)-3-hydroxytetradecanoyl-[acyl-carrier-protein] and UDP-N-acetyl-alpha-D-glucosamine: step 1/6. Functionally, involved in the biosynthesis of lipid A, a phosphorylated glycolipid that anchors the lipopolysaccharide to the outer membrane of the cell. This Campylobacter jejuni (strain RM1221) protein is Acyl-[acyl-carrier-protein]--UDP-N-acetylglucosamine O-acyltransferase.